The primary structure comprises 1734 residues: Gag-Pol polyprotein (1734 aa).

Residue glycine 2 is the site of N-myristoyl glycine; by host attachment. Residues 109 to 112 (PTAP) carry the PTAP/PSAP motif motif. Residues 112–217 (PILPSGPSTQ…STTSRAFPLR (106 aa)) are disordered. An LYPX(n)L motif motif is present at residues 128 to 132 (LYPAL). Positions 161–164 (PPPY) match the PPXY motif motif. Serine 191 carries the post-translational modification Phosphoserine; by host. The tract at residues 344-392 (GRSPTNLAKVKGITQGPNESPSAFLERLKEAYRRYTPYDPEDHGQETSV) is interaction with host PIAS4. The interval 429–434 (IFNKRE) is interaction with host UBE2I. 2 stretches are compositionally biased toward basic and acidic residues: residues 433–474 (RETP…REMS) and 485–498 (RQDRQGGERKRPQL). Disordered stretches follow at residues 433–498 (RETP…RPQL) and 512–551 (WAKDCPKKPRGPRGPRPQTSLLTLDDQGGQGQEPPPEPRI). Residues 437 to 477 (EEREERFRRETEENEERRRAEDEQREKERDRRRQREMSKLL) are a coiled coil. The CCHC-type zinc-finger motif lies at 501-518 (DQCAYCKEKGHWAKDCPK). Residues 560–630 (VTFLVDTGAQ…CPYPLLGRDL (71 aa)) form the Peptidase A2 domain. Aspartate 565 acts as the Protease; shared with dimeric partner in catalysis. In terms of domain architecture, Reverse transcriptase spans 740-931 (LDQGILVPCQ…KQVKYLGYLL (192 aa)). Mg(2+) contacts are provided by aspartate 808, aspartate 882, aspartate 883, aspartate 1182, glutamate 1220, aspartate 1241, and aspartate 1311. The RNase H type-1 domain maps to 1173–1319 (PDADHTWYTD…ADQAAREAAI (147 aa)). The HHCC-type zinc-finger motif lies at 1386–1426 (HRLTHLGYQKMKALLDRGESPYYMLNRDKTLQYVADSCTVC). An Integrase catalytic domain is found at 1443-1601 (RGHRPGTHWE…TPYEILYGAP (159 aa)). The Mg(2+) site is built by aspartate 1454 and aspartate 1513.

It belongs to the retroviral Pol polyprotein family. In terms of assembly, homohexamer; further associates as homomultimer. The virus core is composed of a lattice formed from hexagonal rings, each containing six capsid monomers. Interacts with mouse UBE2I and mouse PIAS4. Interacts (via PPXY motif) with host NEDD4. Interacts (via PSAP motif) with host TSG101. Interacts (via LYPX(n)L motif) with host PDCD6IP. As to quaternary structure, the reverse transcriptase is a monomer (Potential). Interacts (via RNase domains) with host release factor ETF1; this interaction is essential for translational readthrough of amber codon between viral gag and pol genes, as well as for viral replication. In terms of assembly, homodimer. Requires Mg(2+) as cofactor. In terms of processing, ubiquitinated by ITCH. Gag can recruit the ubiquitin ligase Itch in an L domain-independent manner to facilitate virus release via a mechanism that involves Gag ubiquitination. Post-translationally, specific enzymatic cleavages by the viral protease yield mature proteins. The protease is released by autocatalytic cleavage. The polyprotein is cleaved during and after budding, this process is termed maturation. Sumoylated; which is required for virus replication. In terms of processing, phosphorylated on serine residues.

The protein resides in the virion. The protein localises to the host cell membrane. Its subcellular location is the host late endosome membrane. It localises to the host endosome. It is found in the host multivesicular body. The protein resides in the host cytoplasm. It catalyses the reaction DNA(n) + a 2'-deoxyribonucleoside 5'-triphosphate = DNA(n+1) + diphosphate. It carries out the reaction Endonucleolytic cleavage to 5'-phosphomonoester.. Its activity is regulated as follows. Most efficiently inhibited by Amprenavir, which is able to block Gag-Pol processing in infected cells. In terms of biological role, plays a role in budding and is processed by the viral protease during virion maturation outside the cell. During budding, it recruits, in a PPXY-dependent or independent manner, Nedd4-like ubiquitin ligases that conjugate ubiquitin molecules to Gag-Pol, or to Gag-Pol binding host factors. Interaction with HECT ubiquitin ligases probably links the viral protein to the host ESCRT pathway and facilitates release. Targets Gag and gag-pol polyproteins to the plasma membrane via a multipartite membrane binding signal, that includes its myristoylated N-terminus. Also mediates nuclear localization of the pre-integration complex. Its function is as follows. Constituent of the pre-integration complex (PIC) which tethers the latter to mitotic chromosomes. This allows the integration of the viral genome into the host DNA. Functionally, forms the spherical core of the virion that encapsulates the genomic RNA-nucleocapsid complex. In terms of biological role, involved in the packaging and encapsidation of two copies of the genome. Binds with high affinity to conserved UCUG elements within the packaging signal, located near the 5'-end of the genome. This binding is dependent on genome dimerization. Acts as a nucleic acid chaperone which is involved in rearrangement of nucleic acid secondary structures during gRNA retrotranscription. The aspartyl protease mediates proteolytic cleavages of Gag and Gag-Pol polyproteins during or shortly after the release of the virion from the plasma membrane. Cleavages take place as an ordered, step-wise cascade to yield mature proteins. This process is called maturation. Displays maximal activity during the budding process just prior to particle release from the cell (Potential). Cleaves the translation initiation factor eIF4G leading to the inhibition of host cap-dependent translation. Its function is as follows. RT is a multifunctional enzyme that converts the viral dimeric RNA genome into dsDNA in the cytoplasm, shortly after virus entry into the cell. This enzyme displays a DNA polymerase activity that can copy either DNA or RNA templates, and a ribonuclease H (RNase H) activity that cleaves the RNA strand of RNA-DNA heteroduplexes in a partially processive 3' to 5' endonucleasic mode. Conversion of viral genomic RNA into dsDNA requires many steps. A tRNA binds to the primer-binding site (PBS) situated at the 5' end of the viral RNA. RT uses the 3' end of the tRNA primer to perform a short round of RNA-dependent minus-strand DNA synthesis. The reading proceeds through the U5 region and ends after the repeated (R) region which is present at both ends of viral RNA. The portion of the RNA-DNA heteroduplex is digested by the RNase H, resulting in a ssDNA product attached to the tRNA primer. This ssDNA/tRNA hybridizes with the identical R region situated at the 3' end of viral RNA. This template exchange, known as minus-strand DNA strong stop transfer, can be either intra- or intermolecular. RT uses the 3' end of this newly synthesized short ssDNA to perform the RNA-dependent minus-strand DNA synthesis of the whole template. RNase H digests the RNA template except for a polypurine tract (PPT) situated at the 5' end of the genome. It is not clear if both polymerase and RNase H activities are simultaneous. RNase H probably can proceed both in a polymerase-dependent (RNA cut into small fragments by the same RT performing DNA synthesis) and a polymerase-independent mode (cleavage of remaining RNA fragments by free RTs). Secondly, RT performs DNA-directed plus-strand DNA synthesis using the PPT that has not been removed by RNase H as primers. PPT and tRNA primers are then removed by RNase H. The 3' and 5' ssDNA PBS regions hybridize to form a circular dsDNA intermediate. Strand displacement synthesis by RT to the PBS and PPT ends produces a blunt ended, linear dsDNA copy of the viral genome that includes long terminal repeats (LTRs) at both ends. Functionally, catalyzes viral DNA integration into the host chromosome, by performing a series of DNA cutting and joining reactions. This enzyme activity takes place after virion entry into a cell and reverse transcription of the RNA genome in dsDNA. The first step in the integration process is 3' processing. This step requires a complex comprising the viral genome, matrix protein and integrase. This complex is called the pre-integration complex (PIC). The integrase protein removes 2 nucleotides from each 3' end of the viral DNA, leaving recessed CA OH's at the 3' ends. In the second step that requires cell division, the PIC enters cell nucleus. In the third step, termed strand transfer, the integrase protein joins the previously processed 3' ends to the 5' ends of strands of target cellular DNA at the site of integration. The last step is viral DNA integration into host chromosome. The protein is Gag-Pol polyprotein (pol) of Mus musculus (Mouse).